A 236-amino-acid polypeptide reads, in one-letter code: (5-formylfuran-3-yl)methyl phosphate synthase (236 aa).

Catalysis depends on Lys-27, which acts as the Schiff-base intermediate with substrate. Catalysis depends on Lys-85, which acts as the Proton acceptor.

The protein belongs to the MfnB family.

The enzyme catalyses 2 D-glyceraldehyde 3-phosphate = 4-(hydroxymethyl)-2-furancarboxaldehyde phosphate + phosphate + 2 H2O. It participates in cofactor biosynthesis; methanofuran biosynthesis. Catalyzes the formation of 4-(hydroxymethyl)-2-furancarboxaldehyde phosphate (4-HFC-P) from two molecules of glyceraldehyde-3-P (GA-3-P). The chain is (5-formylfuran-3-yl)methyl phosphate synthase from Methanococcus maripaludis (strain C7 / ATCC BAA-1331).